The chain runs to 516 residues: Acetylcholine receptor subunit delta (516 aa).

The signal sequence occupies residues 1 to 21 (MEGSVLTLVLLAALVVCGSWG). Over 22–244 (LNEEERLIRH…VTFYLIIRRK (223 aa)) the chain is Extracellular. N-linked (GlcNAc...) asparagine glycosylation is found at N96 and N163. C150 and C164 are oxidised to a cystine. 3 helical membrane passes run 245-269 (PLFYVINILVPCVLISFMINLVFYL), 279-296 (MAISVLLAQSVFLLLISK), and 311-332 (FLLFGMVLVTMVVVICVIVLNI). At 333 to 470 (HFRTPSTHVL…WNRVARTVDR (138 aa)) the chain is on the cytoplasmic side. Y389 bears the Phosphotyrosine; by Tyr-kinases mark. A helical membrane pass occupies residues 471 to 493 (LCLFVVTPIMVVGTAWIFLQGAY).

It belongs to the ligand-gated ion channel (TC 1.A.9) family. Acetylcholine receptor (TC 1.A.9.1) subfamily. Delta/CHRND sub-subfamily. In terms of assembly, pentamer of two alpha chains, and one each of the beta, delta, and gamma (in immature muscle) or epsilon (in mature muscle) chains. The muscle heteropentamer composed of alpha-1, beta-1, delta, epsilon subunits interacts with the alpha-conotoxin ImII.

Its subcellular location is the postsynaptic cell membrane. It is found in the cell membrane. It carries out the reaction K(+)(in) = K(+)(out). It catalyses the reaction Na(+)(in) = Na(+)(out). After binding acetylcholine, the AChR responds by an extensive change in conformation that affects all subunits and leads to opening of an ion-conducting channel across the plasma membrane. This chain is Acetylcholine receptor subunit delta (CHRND), found in Bos taurus (Bovine).